A 207-amino-acid polypeptide reads, in one-letter code: Protein lin-7 homolog B (207 aa).

The Kinase interacting site motif lies at 1–13 (MAALVEPLGLERD). The L27 domain occupies 10 to 65 (LERDVSRAVELLERLQRSGELPPQKLQALQRVLQSRFCSAIREVYEQLYDTLDITG). In terms of domain architecture, PDZ spans 93 to 175 (VVELPKTDEG…SVKLVVRYTP (83 aa)). The tract at residues 187–207 (KMRSARRRQQHHSYTSLESRG) is disordered. Residues 198 to 207 (HSYTSLESRG) show a composition bias toward polar residues.

The protein belongs to the lin-7 family. Forms a complex with CASK and CASKIN1. Component of the brain-specific heterotrimeric complex (LIN-10-LIN-2-LIN-7 complex) composed of at least APBA1, CASK, and LIN7, which associates with the motor protein KIF17 to transport vesicles along microtubules. Forms a heterotrimeric complex composed of MMP5, LIN7B and PATJ; the N-terminal L27 domain of PALS1 interacts with the L27 domain of PATJ and the C-terminal L27 domain of PALS1 interacts with the L27 domain of LIN7B. Forms a heterotrimeric complex with DLG1 and CASK via their L27 domains. Interacts with DLG4 and GRIN2B as well as CDH1 and CTNNB1, the channels KCNJ12/Kir2.2, KCNJ4/Kir2.3 and probably KCNJ2/Kir2.1 and SLC6A12/BGT-1 via its PDZ domain. The association of LIN7A with cadherin and beta-catenin is calcium-dependent, occurs at synaptic junctions and requires the actin cytoskeleton. Interacts with EGFR, ERBB2, ERBB3 and ERBB4 with both PDZ and KID domains. Associates with KIF17 via APBA1. Interacts with ASIC3. Interacts with TOPK. Interacts with RTKN. Interacts with APBA1. Interacts with MPP7. Interacts with DLG2. Interacts with DLG3. In terms of tissue distribution, expressed in the kidney; predominantly in the vasa recta.

It is found in the cell membrane. Its subcellular location is the basolateral cell membrane. The protein localises to the cell junction. The protein resides in the postsynaptic density membrane. It localises to the tight junction. Functionally, plays a role in establishing and maintaining the asymmetric distribution of channels and receptors at the plasma membrane of polarized cells. Forms membrane-associated multiprotein complexes that may regulate delivery and recycling of proteins to the correct membrane domains. The tripartite complex composed of LIN7 (LIN7A, LIN7B or LIN7C), CASK and APBA1 associates with the motor protein KIF17 to transport vesicles containing N-methyl-D-aspartate (NMDA) receptor subunit NR2B along microtubules. This complex may have the potential to couple synaptic vesicle exocytosis to cell adhesion in brain. Ensures the proper localization of GRIN2B (subunit 2B of the NMDA receptor) to neuronal postsynaptic density and may function in localizing synaptic vesicles at synapses where it is recruited by beta-catenin and cadherin. Required to localize Kir2 channels, GABA transporter (SLC6A12) and EGFR/ERBB1, ERBB2, ERBB3 and ERBB4 to the basolateral membrane of epithelial cells. May increase the amplitude of ASIC3 acid-evoked currents by stabilizing the channel at the cell surface. The polypeptide is Protein lin-7 homolog B (Lin7b) (Mus musculus (Mouse)).